We begin with the raw amino-acid sequence, 318 residues long: Biotin synthase (318 aa).

Positions 44-273 (LCGNKFDLCT…TVQIRLAGGR (230 aa)) constitute a Radical SAM core domain. Residues C62, C66, and C69 each coordinate [4Fe-4S] cluster. S106, C138, C198, and R268 together coordinate [2Fe-2S] cluster.

It belongs to the radical SAM superfamily. Biotin synthase family. Homodimer. The cofactor is [4Fe-4S] cluster. [2Fe-2S] cluster is required as a cofactor.

It catalyses the reaction (4R,5S)-dethiobiotin + (sulfur carrier)-SH + 2 reduced [2Fe-2S]-[ferredoxin] + 2 S-adenosyl-L-methionine = (sulfur carrier)-H + biotin + 2 5'-deoxyadenosine + 2 L-methionine + 2 oxidized [2Fe-2S]-[ferredoxin]. It functions in the pathway cofactor biosynthesis; biotin biosynthesis; biotin from 7,8-diaminononanoate: step 2/2. Catalyzes the conversion of dethiobiotin (DTB) to biotin by the insertion of a sulfur atom into dethiobiotin via a radical-based mechanism. The protein is Biotin synthase of Clostridium botulinum (strain Langeland / NCTC 10281 / Type F).